The chain runs to 898 residues: Alanine--tRNA ligase (898 aa).

Zn(2+) contacts are provided by histidine 564, histidine 568, cysteine 682, and histidine 686.

Belongs to the class-II aminoacyl-tRNA synthetase family. Requires Zn(2+) as cofactor.

The protein resides in the cytoplasm. It catalyses the reaction tRNA(Ala) + L-alanine + ATP = L-alanyl-tRNA(Ala) + AMP + diphosphate. Catalyzes the attachment of alanine to tRNA(Ala) in a two-step reaction: alanine is first activated by ATP to form Ala-AMP and then transferred to the acceptor end of tRNA(Ala). Also edits incorrectly charged Ser-tRNA(Ala) and Gly-tRNA(Ala) via its editing domain. The sequence is that of Alanine--tRNA ligase from Beijerinckia indica subsp. indica (strain ATCC 9039 / DSM 1715 / NCIMB 8712).